The following is a 307-amino-acid chain: Phospho-N-acetylmuramoyl-pentapeptide-transferase (307 aa).

A run of 10 helical transmembrane segments spans residues 3–23 (IILFTSLVAFFVFLLILKYWI), 47–67 (SGTPVMGGIIFLIVSIPFLFF), 71–91 (FFPSLSTILFGLLGLLDDFKL), 105–125 (IFLSFIITLLLYIFSFHDYKI), 137–157 (IFYVILFFVVFIAVPNAINLT), 162–182 (GLAGGTSLITLFFFLIYNFQF), 186–206 (LTLEISLMITALIAFLWFNSH), 210–230 (IFMGDVGAFALGGFIASLSII), 237–257 (LVFLGGIFLIESLSVFIQVFF), and 285–305 (VVWRFYIIHLIMMIGGIILWN).

This sequence belongs to the glycosyltransferase 4 family. MraY subfamily. It depends on Mg(2+) as a cofactor.

The protein localises to the cell inner membrane. The enzyme catalyses UDP-N-acetyl-alpha-D-muramoyl-L-alanyl-gamma-D-glutamyl-meso-2,6-diaminopimeloyl-D-alanyl-D-alanine + di-trans,octa-cis-undecaprenyl phosphate = di-trans,octa-cis-undecaprenyl diphospho-N-acetyl-alpha-D-muramoyl-L-alanyl-D-glutamyl-meso-2,6-diaminopimeloyl-D-alanyl-D-alanine + UMP. Its pathway is cell wall biogenesis; peptidoglycan biosynthesis. Functionally, catalyzes the initial step of the lipid cycle reactions in the biosynthesis of the cell wall peptidoglycan: transfers peptidoglycan precursor phospho-MurNAc-pentapeptide from UDP-MurNAc-pentapeptide onto the lipid carrier undecaprenyl phosphate, yielding undecaprenyl-pyrophosphoryl-MurNAc-pentapeptide, known as lipid I. This chain is Phospho-N-acetylmuramoyl-pentapeptide-transferase, found in Dictyoglomus turgidum (strain DSM 6724 / Z-1310).